Consider the following 878-residue polypeptide: Alanine--tRNA ligase (878 aa).

Zn(2+)-binding residues include H568, H572, C669, and H673.

This sequence belongs to the class-II aminoacyl-tRNA synthetase family. Requires Zn(2+) as cofactor.

Its subcellular location is the cytoplasm. It carries out the reaction tRNA(Ala) + L-alanine + ATP = L-alanyl-tRNA(Ala) + AMP + diphosphate. Catalyzes the attachment of alanine to tRNA(Ala) in a two-step reaction: alanine is first activated by ATP to form Ala-AMP and then transferred to the acceptor end of tRNA(Ala). Also edits incorrectly charged Ser-tRNA(Ala) and Gly-tRNA(Ala) via its editing domain. The protein is Alanine--tRNA ligase of Polaromonas sp. (strain JS666 / ATCC BAA-500).